Reading from the N-terminus, the 274-residue chain is NADPH-dependent 7-cyano-7-deazaguanine reductase (274 aa).

80–82 (VES) lines the substrate pocket. 82-83 (SK) provides a ligand contact to NADPH. The active-site Thioimide intermediate is the cysteine 181. Residue aspartate 188 is the Proton donor of the active site. 220-221 (HE) lines the substrate pocket. 249–250 (RG) serves as a coordination point for NADPH.

This sequence belongs to the GTP cyclohydrolase I family. QueF type 2 subfamily. As to quaternary structure, homodimer.

The protein resides in the cytoplasm. It catalyses the reaction 7-aminomethyl-7-carbaguanine + 2 NADP(+) = 7-cyano-7-deazaguanine + 2 NADPH + 3 H(+). It functions in the pathway tRNA modification; tRNA-queuosine biosynthesis. Functionally, catalyzes the NADPH-dependent reduction of 7-cyano-7-deazaguanine (preQ0) to 7-aminomethyl-7-deazaguanine (preQ1). The polypeptide is NADPH-dependent 7-cyano-7-deazaguanine reductase (Burkholderia mallei (strain NCTC 10247)).